The following is a 361-amino-acid chain: 3-dehydroquinate synthase (361 aa).

NAD(+) is bound by residues 72–77 (SGEKEK), 130–131 (TT), K142, and K151. Residues E184, H247, and H264 each coordinate Zn(2+).

This sequence belongs to the sugar phosphate cyclases superfamily. Dehydroquinate synthase family. Co(2+) serves as cofactor. Requires Zn(2+) as cofactor. NAD(+) is required as a cofactor.

Its subcellular location is the cytoplasm. The enzyme catalyses 7-phospho-2-dehydro-3-deoxy-D-arabino-heptonate = 3-dehydroquinate + phosphate. The protein operates within metabolic intermediate biosynthesis; chorismate biosynthesis; chorismate from D-erythrose 4-phosphate and phosphoenolpyruvate: step 2/7. Catalyzes the conversion of 3-deoxy-D-arabino-heptulosonate 7-phosphate (DAHP) to dehydroquinate (DHQ). The sequence is that of 3-dehydroquinate synthase from Bacillus cereus (strain ZK / E33L).